The primary structure comprises 96 residues: Co-chaperonin GroES (96 aa).

Belongs to the GroES chaperonin family. As to quaternary structure, heptamer of 7 subunits arranged in a ring. Interacts with the chaperonin GroEL.

The protein resides in the cytoplasm. Together with the chaperonin GroEL, plays an essential role in assisting protein folding. The GroEL-GroES system forms a nano-cage that allows encapsulation of the non-native substrate proteins and provides a physical environment optimized to promote and accelerate protein folding. GroES binds to the apical surface of the GroEL ring, thereby capping the opening of the GroEL channel. This Hahella chejuensis (strain KCTC 2396) protein is Co-chaperonin GroES.